Here is a 262-residue protein sequence, read N- to C-terminus: Expansin-A13 (262 aa).

Residues 1–22 (MAGVARMLAAVVCAIMPAAAMA) form the signal peptide. The 116-residue stretch at 52-167 (GGACGYGNLY…QRVPCMKKGG (116 aa)) folds into the Expansin-like EG45 domain. The 81-residue stretch at 177-257 (YFQLVLLTNV…GWRFGQTFAS (81 aa)) folds into the Expansin-like CBD domain.

Belongs to the expansin family. Expansin A subfamily. In terms of tissue distribution, expressed in roots and flowers.

The protein resides in the secreted. The protein localises to the cell wall. It is found in the membrane. In terms of biological role, may cause loosening and extension of plant cell walls by disrupting non-covalent bonding between cellulose microfibrils and matrix glucans. No enzymatic activity has been found. May be required for rapid internodal elongation in deepwater rice during submergence. The chain is Expansin-A13 (EXPA13) from Oryza sativa subsp. japonica (Rice).